A 745-amino-acid chain; its full sequence is uncharacterized protein (745 aa).

The 99-residue stretch at 158–256 (NQVCDYIELH…HQTPKQYRGD (99 aa)) folds into the HTH araC/xylS-type domain. 2 consecutive DNA-binding regions (H-T-H motif) follow at residues 175-196 (SELS…TESL) and 223-246 (ITDI…KHFT).

This is an uncharacterized protein from Staphylococcus aureus (strain MW2).